The primary structure comprises 217 residues: Small ribosomal subunit protein uS3 (217 aa).

A KH type-2 domain is found at 40-110; it reads IRDLINKGFN…EVYINIHEVR (71 aa).

It belongs to the universal ribosomal protein uS3 family. As to quaternary structure, part of the 30S ribosomal subunit. Forms a tight complex with proteins S10 and S14.

Its function is as follows. Binds the lower part of the 30S subunit head. Binds mRNA in the 70S ribosome, positioning it for translation. The chain is Small ribosomal subunit protein uS3 from Rickettsia felis (strain ATCC VR-1525 / URRWXCal2) (Rickettsia azadi).